The sequence spans 214 residues: Eukaryotic translation initiation factor 4E-1B (214 aa).

MRNA-binding positions include 53–54 (WQ), 99–100 (WE), 154–159 (RAKGDK), and 202–204 (TKS).

As to expression, ovary, muscle and testis.

The protein localises to the cytoplasm. The protein resides in the nucleus. Functionally, does not appear to be a mRNA-cap-binding protein. The chain is Eukaryotic translation initiation factor 4E-1B from Danio rerio (Zebrafish).